Here is a 264-residue protein sequence, read N- to C-terminus: Zinc import ATP-binding protein ZnuC (264 aa).

The region spanning 20 to 235 (VQLKNIEVTF…PNFIHFFGDQ (216 aa)) is the ABC transporter domain. An ATP-binding site is contributed by 52 to 59 (GPNGGGKS).

The protein belongs to the ABC transporter superfamily. Zinc importer (TC 3.A.1.15.5) family. As to quaternary structure, the complex is composed of two ATP-binding proteins (ZnuC), two transmembrane proteins (ZnuB) and a solute-binding protein (ZnuA).

It is found in the cell inner membrane. It carries out the reaction Zn(2+)(out) + ATP(in) + H2O(in) = Zn(2+)(in) + ADP(in) + phosphate(in) + H(+)(in). Its function is as follows. Part of the ABC transporter complex ZnuABC involved in zinc import. Responsible for energy coupling to the transport system. The sequence is that of Zinc import ATP-binding protein ZnuC from Haemophilus ducreyi (strain 35000HP / ATCC 700724).